A 400-amino-acid polypeptide reads, in one-letter code: Probable glucan endo-1,6-beta-glucosidase B (400 aa).

Positions 1–17 (MIRRLAALSALSGLATA) are cleaved as a signal peptide. Asparagine 30 is a glycosylation site (N-linked (GlcNAc...) asparagine). Catalysis depends on glutamate 219, which acts as the Proton donor. Asparagine 272 carries N-linked (GlcNAc...) asparagine glycosylation. The Nucleophile role is filled by glutamate 320.

This sequence belongs to the glycosyl hydrolase 5 (cellulase A) family.

The protein localises to the secreted. The catalysed reaction is Random hydrolysis of (1-&gt;6)-linkages in (1-&gt;6)-beta-D-glucans.. In terms of biological role, beta-glucanases participate in the metabolism of beta-glucan, the main structural component of the cell wall. Acts on lutean, pustulan and 1,6-oligo-beta-D-glucosides. The chain is Probable glucan endo-1,6-beta-glucosidase B (exgB) from Neosartorya fischeri (strain ATCC 1020 / DSM 3700 / CBS 544.65 / FGSC A1164 / JCM 1740 / NRRL 181 / WB 181) (Aspergillus fischerianus).